The sequence spans 96 residues: Large ribosomal subunit protein eL21 (96 aa).

This sequence belongs to the eukaryotic ribosomal protein eL21 family.

This is Large ribosomal subunit protein eL21 from Methanosphaerula palustris (strain ATCC BAA-1556 / DSM 19958 / E1-9c).